The primary structure comprises 169 residues: MICOS complex subunit MIC19 (169 aa).

Glycine 2 is lipidated: N-myristoyl glycine. The CHCH domain maps to 123-165 (ENVCQDNENEIVRCLQENPGRVLKCAPLTEAFEKCVGEFRQQV). 2 consecutive short sequence motifs (cx9C motif) follow at residues 126–136 (CQDNENEIVRC) and 147–157 (CAPLTEAFEKC). Disulfide bonds link cysteine 126/cysteine 157 and cysteine 136/cysteine 147.

Belongs to the MICOS complex subunit Mic19 family. Metazoan Mic19 subfamily. As to quaternary structure, component of the mitochondrial contact site and cristae organizing system (MICOS) complex.

It is found in the mitochondrion inner membrane. Plays a role in maintaining mitochondrial morphology. May act as a component of the MICOS complex, a large protein complex of the mitochondria. This Caenorhabditis elegans protein is MICOS complex subunit MIC19.